The chain runs to 504 residues: Maturase K (504 aa).

The protein belongs to the intron maturase 2 family. MatK subfamily.

The protein localises to the plastid. Its subcellular location is the chloroplast. Its function is as follows. Usually encoded in the trnK tRNA gene intron. Probably assists in splicing its own and other chloroplast group II introns. This is Maturase K from Draba nemorosa (Woodland whitlowgrass).